A 327-amino-acid chain; its full sequence is Phenylalanine--tRNA ligase alpha subunit (327 aa).

Position 252 (glutamate 252) interacts with Mg(2+).

The protein belongs to the class-II aminoacyl-tRNA synthetase family. Phe-tRNA synthetase alpha subunit type 1 subfamily. Tetramer of two alpha and two beta subunits. The cofactor is Mg(2+).

The protein localises to the cytoplasm. The enzyme catalyses tRNA(Phe) + L-phenylalanine + ATP = L-phenylalanyl-tRNA(Phe) + AMP + diphosphate + H(+). The chain is Phenylalanine--tRNA ligase alpha subunit from Vibrio cholerae serotype O1 (strain ATCC 39541 / Classical Ogawa 395 / O395).